The following is a 376-amino-acid chain: Putative clathrin assembly protein At1g25240 (376 aa).

Residues 25 to 156 (KTSFRNPDLD…FFLSDQIRRR (132 aa)) enclose the ENTH domain.

It localises to the membrane. It is found in the clathrin-coated pit. The protein localises to the golgi apparatus. Its subcellular location is the cytoplasmic vesicle. The protein resides in the clathrin-coated vesicle. In Arabidopsis thaliana (Mouse-ear cress), this protein is Putative clathrin assembly protein At1g25240.